Consider the following 903-residue polypeptide: Calcium-activated chloride channel regulator 1 (903 aa).

The first 21 residues, 1–21 (MVPRLTVILFLTLHLLPGMKS), serve as a signal peptide directing secretion. The metalloprotease domain stretch occupies residues 45 to 199 (DEKLIQNIKE…HITGTNVIVK (155 aa)). His-155 provides a ligand contact to Zn(2+). Glu-156 is an active-site residue. Positions 159 and 166 each coordinate Zn(2+). Residues 308-476 (VVCLVLDKSG…NGLTNAFSRI (169 aa)) form the VWFA domain. 4 N-linked (GlcNAc...) asparagine glycosylation sites follow: Asn-360, Asn-372, Asn-504, and Asn-842. Residues 883 to 903 (GTKISAINLAIFALAMILSIV) traverse the membrane as a helical segment.

It belongs to the CLCR family. Post-translationally, glycosylated. In terms of processing, the 125-kDa product is autoproteolytically processed by the metalloprotease domain and yields to two cell-surface-associated subunits, a 90-kDa protein and a group of 37- to 41-kDa proteins. The cleavage is necessary for calcium-activated chloride channel (CaCC) activation activity. In terms of tissue distribution, trachea.

Its subcellular location is the apical cell membrane. May be involved in mediating calcium-activated chloride conductance. May play critical roles in goblet cell metaplasia, mucus hypersecretion, cystic fibrosis and AHR. May be involved in the regulation of mucus production and/or secretion by goblet cells. Involved in the regulation of tissue inflammation in the innate immune response. May play a role as a tumor suppressor. Induces MUC5AC. The sequence is that of Calcium-activated chloride channel regulator 1 from Bos taurus (Bovine).